The sequence spans 293 residues: ATP synthase gamma chain (293 aa).

This sequence belongs to the ATPase gamma chain family. In terms of assembly, F-type ATPases have 2 components, CF(1) - the catalytic core - and CF(0) - the membrane proton channel. CF(1) has five subunits: alpha(3), beta(3), gamma(1), delta(1), epsilon(1). CF(0) has three main subunits: a, b and c.

Its subcellular location is the cell inner membrane. Produces ATP from ADP in the presence of a proton gradient across the membrane. The gamma chain is believed to be important in regulating ATPase activity and the flow of protons through the CF(0) complex. This chain is ATP synthase gamma chain, found in Gluconacetobacter diazotrophicus (strain ATCC 49037 / DSM 5601 / CCUG 37298 / CIP 103539 / LMG 7603 / PAl5).